The chain runs to 59 residues: Large ribosomal subunit protein bL32 (59 aa).

Belongs to the bacterial ribosomal protein bL32 family.

This chain is Large ribosomal subunit protein bL32, found in Desulfitobacterium hafniense (strain Y51).